Consider the following 579-residue polypeptide: Zinc finger protein 248 (579 aa).

Residues Val8–Pro79 enclose the KRAB domain. A C2H2-type 1; degenerate zinc finger spans residues Thr240–His264. Lys341 is covalently cross-linked (Glycyl lysine isopeptide (Lys-Gly) (interchain with G-Cter in SUMO2)). 7 consecutive C2H2-type zinc fingers follow at residues Phe380–His402, Tyr408–His430, Tyr436–His458, Tyr464–His486, Phe492–His514, Tyr520–Thr543, and Tyr548–His570.

The protein belongs to the krueppel C2H2-type zinc-finger protein family.

The protein resides in the nucleus. In terms of biological role, may be involved in transcriptional regulation. This is Zinc finger protein 248 (ZNF248) from Homo sapiens (Human).